The following is a 214-amino-acid chain: Large ribosomal subunit protein uL4 (214 aa).

The disordered stretch occupies residues 43 to 83; that stretch reads RRQAGTHKAKSRSEVNRTTKKSIKQKGSGGARHGSRNAPIF.

The protein belongs to the universal ribosomal protein uL4 family. As to quaternary structure, part of the 50S ribosomal subunit.

Its function is as follows. One of the primary rRNA binding proteins, this protein initially binds near the 5'-end of the 23S rRNA. It is important during the early stages of 50S assembly. It makes multiple contacts with different domains of the 23S rRNA in the assembled 50S subunit and ribosome. Forms part of the polypeptide exit tunnel. The chain is Large ribosomal subunit protein uL4 from Hyphomonas neptunium (strain ATCC 15444).